Here is a 652-residue protein sequence, read N- to C-terminus: Zinc finger protein 503 (652 aa).

Over residues 1 to 11 (MSTAPSLSALR) the composition is skewed to polar residues. Positions 1 to 72 (MSTAPSLSAL…HAVPPSDPLR (72 aa)) are disordered. Residues 16-32 (SGGGGGGGGGGGSGGGS) show a composition bias toward gly residues. The residue at position 107 (Ser107) is a Phosphoserine. Disordered stretches follow at residues 126–283 (SQIG…GVPA) and 296–338 (INVD…SSVL). Residues 135 to 144 (PSSKLSSVAS) show a composition bias toward low complexity. Composition is skewed to gly residues over residues 145–157 (NGGGAGGAGNGAG) and 194–209 (GGGGGGGGGGGGGGGV). At Lys213 the chain carries N6-acetyllysine. The segment covering 221–230 (ATCQPFTPRT) has biased composition (polar residues). Over residues 231-244 (GSPSSSASACSPGG) the composition is skewed to low complexity. Ser235 and Ser241 each carry phosphoserine. Basic and acidic residues predominate over residues 254–263 (EGKDDKKDPE). The segment covering 264-283 (AGGGGSSKGSGGASADGVPA) has biased composition (gly residues). The span at 314–336 (GSDCGGSSSSSSGSGPSAPTSSS) shows a compositional bias: low complexity. The segment at 520 to 548 (HICNWVSANGPCDKRFATSEELLSHLRTH) adopts a C2H2-type zinc-finger fold. Position 642 is an omega-N-methylarginine (Arg642).

This sequence belongs to the Elbow/Noc family.

It localises to the nucleus. May function as a transcriptional repressor. The polypeptide is Zinc finger protein 503 (Znf503) (Mus musculus (Mouse)).